The sequence spans 434 residues: Nicotinate phosphoribosyltransferase (434 aa).

Position 242 is a phosphohistidine; by autocatalysis (histidine 242).

It belongs to the NAPRTase family. In terms of processing, transiently phosphorylated on a His residue during the reaction cycle. Phosphorylation strongly increases the affinity for substrates and increases the rate of nicotinate D-ribonucleotide production. Dephosphorylation regenerates the low-affinity form of the enzyme, leading to product release.

It catalyses the reaction nicotinate + 5-phospho-alpha-D-ribose 1-diphosphate + ATP + H2O = nicotinate beta-D-ribonucleotide + ADP + phosphate + diphosphate. Its pathway is cofactor biosynthesis; NAD(+) biosynthesis; nicotinate D-ribonucleotide from nicotinate: step 1/1. Its function is as follows. Catalyzes the synthesis of beta-nicotinate D-ribonucleotide from nicotinate and 5-phospho-D-ribose 1-phosphate at the expense of ATP. This Bartonella quintana (strain Toulouse) (Rochalimaea quintana) protein is Nicotinate phosphoribosyltransferase.